The following is a 149-amino-acid chain: Natriuretic peptides A (149 aa).

The N-terminal stretch at 1–23 (MGSPIAASFLLFLAVQLLGQTGA) is a signal peptide. 2 propeptides span residues 24-121 (NPVY…AAPR) and 91-101 (DGGALGRSPWD). The disordered stretch occupies residues 49-103 (MPLEDEAESPQALSEQNAEAGAALSPLPEVPPWTGEVSPAQRDGGALGRSPWDSS). The residue at position 127 (S127) is a Phosphoserine. A disulfide bond links C128 and C144. Residues 145 to 149 (NSFRY) are important for degradation of atrial natriuretic peptide by IDE.

The protein belongs to the natriuretic peptide family. Homodimer; disulfide-linked antiparallel dimer. Post-translationally, the precursor molecule is proteolytically cleaved by CORIN at Arg-121 to produce the atrial natriuretic peptide. Undergoes further proteolytic cleavage by unknown proteases to give rise to long-acting natriuretic peptide, vessel dilator and kaliuretic peptide. Additional processing gives rise to the auriculin and atriopeptin peptides. In the kidneys, alternative processing by an unknown protease results in the peptide urodilatin. In terms of processing, cleavage by MME initiates degradation of the factor and thereby regulates its activity. Degradation by IDE results in reduced activation of NPR1 (in vitro). During IDE degradation, the resulting products can temporarily stimulate NPR2 to produce cGMP, before the fragments are completely degraded and inactivated by IDE (in vitro). Degraded by IDE. Post-translationally, phosphorylation on Ser-127 decreases vasorelaxant activity.

The protein resides in the secreted. It is found in the perikaryon. The protein localises to the cell projection. Functionally, hormone that plays a key role in mediating cardio-renal homeostasis, and is involved in vascular remodeling and regulating energy metabolism. Acts by specifically binding and stimulating NPR1 to produce cGMP, which in turn activates effector proteins, such as PRKG1, that drive various biological responses. Regulates vasodilation, natriuresis, diuresis and aldosterone synthesis and is therefore essential for regulating blood pressure, controlling the extracellular fluid volume and maintaining the fluid-electrolyte balance. Also involved in inhibiting cardiac remodeling and cardiac hypertrophy by inducing cardiomyocyte apoptosis and attenuating the growth of cardiomyocytes and fibroblasts. Plays a role in female pregnancy by promoting trophoblast invasion and spiral artery remodeling in uterus, and thus prevents pregnancy-induced hypertension. In adipose tissue, acts in various cGMP- and PKG-dependent pathways to regulate lipid metabolism and energy homeostasis. This includes up-regulating lipid metabolism and mitochondrial oxygen utilization by activating the AMP-activated protein kinase (AMPK), and increasing energy expenditure by acting via MAPK11 to promote the UCP1-dependent thermogenesis of brown adipose tissue. Binds the clearance receptor NPR3 which removes the hormone from circulation. In terms of biological role, may have a role in cardio-renal homeostasis through regulation of natriuresis, diuresis, vasodilation, and inhibiting aldosterone synthesis. In vitro, promotes the production of cGMP and induces vasodilation. May promote natriuresis, at least in part, by enhancing prostaglandin E2 synthesis resulting in the inhibition of renal Na+-K+-ATPase. However reports on the involvement of this peptide in mammal blood volume and blood pressure homeostasis are conflicting; according to a report, in vivo it is not sufficient to activate cGMP and does not inhibit collecting duct transport nor effect diuresis and natriuresis. Appears to bind to specific receptors that are distinct from the receptors bound by atrial natriuretic peptide and vessel dilator. Possibly enhances protein excretion in urine by decreasing proximal tubular protein reabsorption. May have a role in cardio-renal homeostasis through regulation of natriuresis, diuresis, and vasodilation. In vitro, promotes the production of cGMP and induces vasodilation. May promote natriuresis, at least in part, by enhancing prostaglandin E2 synthesis resulting in the inhibition of renal Na+-K+-ATPase. However reports on the involvement of this peptide in mammal blood volume and blood pressure homeostasis are conflicting; according to a report it is not sufficient to activate cGMP and does not inhibit collecting duct transport nor effect diuresis and natriuresis. Appears to bind to specific receptors that are distinct from the receptors bound by the atrial natriuretic and long-acting natriuretic peptides. Possibly functions in protein excretion in urine by maintaining the integrity of the proximal tubules and enhancing protein excretion by decreasing proximal tubular protein reabsorption. Its function is as follows. May have a role in cardio-renal homeostasis through regulation of diuresis and inhibiting aldosterone synthesis. In vitro, promotes the production of cGMP and induces vasodilation. May promote natriuresis, at least in part, by enhancing prostaglandin E2 synthesis resulting in the inhibition of renal Na+-K+-ATPase. May have a role in potassium excretion but not sodium excretion (natriuresis). Possibly enhances protein excretion in urine by decreasing proximal tubular protein reabsorption. Functionally, hormone produced in the kidneys that appears to be important for maintaining cardio-renal homeostasis. Mediates vasodilation, natriuresis and diuresis primarily in the renal system, in order to maintain the extracellular fluid volume and control the fluid-electrolyte balance. Specifically binds and stimulates cGMP production by renal transmembrane receptors, likely NPR1. Urodilatin not ANP, may be the natriuretic peptide responsible for the regulation of sodium and water homeostasis in the kidney. In terms of biological role, may have a role in cardio-renal homeostasis through regulation of natriuresis and vasodilation. In vivo promotes natriuresis and in vitro, vasodilates renal artery strips. May have a role in cardio-renal homeostasis through regulation of regulation of natriuresis and vasodilation. In vivo promotes natriuresis. In vitro, vasodilates intestinal smooth muscle but not smooth muscle strips. Its function is as follows. May have a role in cardio-renal homeostasis through regulation of natriuresis and vasodilation. In vivo promotes natriuresis. In vitro, selectively vasodilates intestinal and vascular smooth muscle strips. Functionally, may have a role in cardio-renal homeostasis through regulation of natriuresis and vasodilation. In vivo promotes natriuresis. In vitro, selectively vasodilates intestinal smooth muscle but not vascular smooth muscle strips. In Canis lupus familiaris (Dog), this protein is Natriuretic peptides A (NPPA).